The primary structure comprises 375 residues: Lipid-A-disaccharide synthase (375 aa).

Belongs to the LpxB family.

The enzyme catalyses a lipid X + a UDP-2-N,3-O-bis[(3R)-3-hydroxyacyl]-alpha-D-glucosamine = a lipid A disaccharide + UDP + H(+). It functions in the pathway bacterial outer membrane biogenesis; LPS lipid A biosynthesis. In terms of biological role, condensation of UDP-2,3-diacylglucosamine and 2,3-diacylglucosamine-1-phosphate to form lipid A disaccharide, a precursor of lipid A, a phosphorylated glycolipid that anchors the lipopolysaccharide to the outer membrane of the cell. The polypeptide is Lipid-A-disaccharide synthase (Pseudomonas putida (strain ATCC 47054 / DSM 6125 / CFBP 8728 / NCIMB 11950 / KT2440)).